The sequence spans 478 residues: 7-dehydrocholesterol reductase (478 aa).

Residues 1-28 are disordered; it reads MMASDRVRKRHKGSANGAQTVEKEPSKE. 6 helical membrane passes run 43–63, 97–117, 180–200, 269–289, 309–329, and 333–353; these read LSGV…FIMA, WAAA…YMCV, WIPL…FAFI, VTNS…DFFW, LGWG…LYLV, and IQLS…GYYI. NADP(+)-binding positions include Lys361, Arg365, Met398, Trp403, and 410-411; that span reads NY. The helical transmembrane segment at 424–444 threads the bilayer; the sequence is ACGGNHLLPYFYIIYMTILLV. Residues Asp450, 454 to 458, and Tyr465 contribute to the NADP(+) site; that span reads CSNKY.

It belongs to the ERG4/ERG24 family.

Its subcellular location is the endoplasmic reticulum membrane. The enzyme catalyses cholesterol + NADP(+) = 7-dehydrocholesterol + NADPH + H(+). The catalysed reaction is 7-dehydrodesmosterol + NADPH + H(+) = desmosterol + NADP(+). The protein operates within steroid biosynthesis; cholesterol biosynthesis. In terms of biological role, catalyzes the last step of the cholesterol synthesis pathway, which transforms cholesta-5,7-dien-3beta-ol (7-dehydrocholesterol,7-DHC) into cholesterol by reducing the C7-C8 double bond of its sterol core. Can also metabolize cholesta-5,7,24-trien-3beta-ol (7-dehydrodemosterol, 7-DHD) to desmosterol, which is then metabolized by the Delta(24)-sterol reductase (DHCR24) to cholesterol. Modulates ferroptosis (a form of regulated cell death driven by iron-dependent lipid peroxidation) through the metabolic breakdown of the anti-ferroptotic metabolites 7-DHC and 7-DHD which, when accumulated, divert the propagation of peroxyl radical-mediated damage from phospholipid components to its sterol core, protecting plasma and mitochondrial membranes from phospholipid autoxidation. The polypeptide is 7-dehydrocholesterol reductase (dhcr7) (Danio rerio (Zebrafish)).